The following is a 594-amino-acid chain: Elongation factor 4 (594 aa).

Residues 2-184 (KNIRNFSIIA…TIVAKVPAPE (183 aa)) form the tr-type G domain. GTP contacts are provided by residues 14–19 (DHGKST) and 131–134 (NKID).

It belongs to the TRAFAC class translation factor GTPase superfamily. Classic translation factor GTPase family. LepA subfamily.

It is found in the cell inner membrane. The enzyme catalyses GTP + H2O = GDP + phosphate + H(+). Functionally, required for accurate and efficient protein synthesis under certain stress conditions. May act as a fidelity factor of the translation reaction, by catalyzing a one-codon backward translocation of tRNAs on improperly translocated ribosomes. Back-translocation proceeds from a post-translocation (POST) complex to a pre-translocation (PRE) complex, thus giving elongation factor G a second chance to translocate the tRNAs correctly. Binds to ribosomes in a GTP-dependent manner. The protein is Elongation factor 4 of Francisella philomiragia subsp. philomiragia (strain ATCC 25017 / CCUG 19701 / FSC 153 / O#319-036).